Reading from the N-terminus, the 868-residue chain is DNA mismatch repair protein MutS (868 aa).

Position 621–628 (621–628 (GPNMGGKS)) interacts with ATP. Positions 803-852 (LESGDGGDTGSAQLPLFGPEPVFPPPAQPEPEPDPIREAVENLDPDGLTP) are disordered. Pro residues predominate over residues 823 to 832 (PVFPPPAQPE).

This sequence belongs to the DNA mismatch repair MutS family.

This protein is involved in the repair of mismatches in DNA. It is possible that it carries out the mismatch recognition step. This protein has a weak ATPase activity. The sequence is that of DNA mismatch repair protein MutS from Halorhodospira halophila (strain DSM 244 / SL1) (Ectothiorhodospira halophila (strain DSM 244 / SL1)).